The sequence spans 470 residues: Shutoff alkaline exonuclease (470 aa).

It belongs to the herpesviridae alkaline nuclease family. As to quaternary structure, forms a complex with the DNA polymerase, the DNA polymerase processivity factor, and the major DNA binding protein.

The protein resides in the host nucleus. It is found in the host cytoplasm. Its function is as follows. Plays a role in processing non linear or branched viral DNA intermediates in order to promote the production of mature packaged unit-length linear progeny viral DNA molecules. Exhibits endonuclease and exonuclease activities and accepts both double-stranded and single-stranded DNA as substrate. Exonuclease digestion of DNA is in the 5'-&gt; 3' direction and the products are 5'-monophosphate nucleosides. Additionally, forms a recombinase with the major DNA-binding protein, which displays strand exchange activity. Also acts as a cytoplasmic RNA endonuclease that induces degradation of the majority of the cellular messenger RNAs during early lytic infection. The resulting inhibition of cellular protein synthesis serves to ensure maximal viral gene expression and evasion from host immune response. Internally cleaves host mRNAs which are then degraded by the cellular exonuclease XRN1. Bypasses therefore the regulatory steps of deadenylation and decapping normally required for XRN1 activation. In Epstein-Barr virus (strain GD1) (HHV-4), this protein is Shutoff alkaline exonuclease.